The following is a 248-amino-acid chain: Small ribosomal subunit protein uS2 (248 aa).

This sequence belongs to the universal ribosomal protein uS2 family.

The chain is Small ribosomal subunit protein uS2 from Cupriavidus necator (strain ATCC 17699 / DSM 428 / KCTC 22496 / NCIMB 10442 / H16 / Stanier 337) (Ralstonia eutropha).